A 113-amino-acid polypeptide reads, in one-letter code: Hydrogenase maturation factor HypA (113 aa).

Residue His2 participates in Ni(2+) binding. Positions 73, 76, 89, and 92 each coordinate Zn(2+).

The protein belongs to the HypA/HybF family.

Functionally, involved in the maturation of [NiFe] hydrogenases. Required for nickel insertion into the metal center of the hydrogenase. The sequence is that of Hydrogenase maturation factor HypA from Beijerinckia indica subsp. indica (strain ATCC 9039 / DSM 1715 / NCIMB 8712).